A 600-amino-acid chain; its full sequence is NADH-ubiquinone oxidoreductase chain 5 (600 aa).

The next 16 membrane-spanning stretches (helical) occupy residues 1 to 21, 27 to 47, 81 to 101, 110 to 130, 136 to 156, 178 to 198, 200 to 220, 241 to 261, 274 to 294, 301 to 323, 327 to 347, 366 to 386, 404 to 424, 450 to 470, 488 to 508, and 520 to 540; these read MYIL…LFGR, GAGI…LLIF, LTAV…IFST, VPRF…LVTS, LFIG…FWLT, FVLA…ASVF, IVAL…FIGA, TPVS…FLLI, LMVV…IGLV, VIAY…SQYS, FHLM…GSVI, IPFT…FPYL, YLAF…AYSL, WNLT…GYLT, SIKL…VVLY, and SPVG…NYII.

This sequence belongs to the complex I subunit 5 family.

It is found in the mitochondrion inner membrane. The enzyme catalyses a ubiquinone + NADH + 5 H(+)(in) = a ubiquinol + NAD(+) + 4 H(+)(out). Core subunit of the mitochondrial membrane respiratory chain NADH dehydrogenase (Complex I) that is believed to belong to the minimal assembly required for catalysis. Complex I functions in the transfer of electrons from NADH to the respiratory chain. The immediate electron acceptor for the enzyme is believed to be ubiquinone. This is NADH-ubiquinone oxidoreductase chain 5 (ND5) from Metridium senile (Brown sea anemone).